A 704-amino-acid chain; its full sequence is Sulfate anion transporter 1 (704 aa).

T13 bears the Phosphothreonine mark. A run of 2 helical transmembrane segments spans residues 68–90 (YLAGDVMSGLVIGIILVPQAIAY) and 94–116 (AGLQPIYSLYTSFFANLIYFLMG). 2 N-linked (GlcNAc...) asparagine glycosylation sites follow: N158 and N163. Transmembrane regions (helical) follow at residues 185-207 (VATALTLMAGLYQVLMGILRLGF), 260-282 (NVGQANICDVVTSALCLGVLLAA), 295-314 (VPIPTELFVIVVATIVSHFG), 347-369 (ALDAMSLALVGSAFSISLAEMFA), 382-404 (LLAVGCCNVLPAFFHCFATSAAL), 417-439 (TQLSSVVSAAVVLLVLLVLAPLF), and 477-499 (LVWVATAATCVLVSTEAGLLAGV). An STAS domain is found at 532–690 (EFEGLLPPPE…PSVHSAVEAA (159 aa)). A Phosphoserine modification is found at S587. Residue N588 is glycosylated (N-linked (GlcNAc...) asparagine). S590 bears the Phosphoserine mark.

It belongs to the SLC26A/SulP transporter (TC 2.A.53) family. Expressed in the heart, cecum, calvaria, brain, liver, skeletal muscle and kidney.

It localises to the cell membrane. The protein localises to the basolateral cell membrane. The enzyme catalyses thiosulfate(in) + sulfate(out) = thiosulfate(out) + sulfate(in). It catalyses the reaction 2 hydrogencarbonate(out) + sulfate(in) = 2 hydrogencarbonate(in) + sulfate(out). The catalysed reaction is oxalate(in) + sulfate(out) = oxalate(out) + sulfate(in). It carries out the reaction oxalate(in) + 2 hydrogencarbonate(out) = oxalate(out) + 2 hydrogencarbonate(in). Functionally, sodium-independent sulfate anion transporter. Can transport other anions including bicarbonate, thiosulfate and oxalate by mediating sulfate-hydrogencarbonate, sulfate-oxalate and oxalate-hydrogencarbonate anion exchange. Mediates sulfate-thiosulfate anion exchange. The sequence is that of Sulfate anion transporter 1 (Slc26a1) from Mus musculus (Mouse).